A 329-amino-acid polypeptide reads, in one-letter code: Cytosolic arginine sensor for mTORC1 subunit 2 (329 aa).

ACT domains lie at 72-139 (ADAT…MHTL) and 262-322 (ELWK…NALQ).

The protein belongs to the GATS family. In terms of assembly, may form homodimers and heterodimers.

It localises to the cytoplasm. Its subcellular location is the cytosol. Its function is as follows. Functions as a negative regulator of the TORC1 signaling pathway. The sequence is that of Cytosolic arginine sensor for mTORC1 subunit 2 from Xenopus laevis (African clawed frog).